Consider the following 422-residue polypeptide: Adenylosuccinate synthetase (422 aa).

GTP-binding positions include 11-17 (GDEGKGK) and 39-41 (GHT). The active-site Proton acceptor is the Asp-12. Asp-12 and Gly-39 together coordinate Mg(2+). Residues 12-15 (DEGK), 37-40 (NAGH), Thr-129, Arg-143, Asn-220, Thr-235, and Arg-299 contribute to the IMP site. The active-site Proton donor is His-40. Residue 295 to 301 (VTTGRKR) participates in substrate binding. Residues Arg-301, 327–329 (KLD), and 410–412 (GTG) contribute to the GTP site.

It belongs to the adenylosuccinate synthetase family. As to quaternary structure, homodimer. Mg(2+) is required as a cofactor.

Its subcellular location is the cytoplasm. It catalyses the reaction IMP + L-aspartate + GTP = N(6)-(1,2-dicarboxyethyl)-AMP + GDP + phosphate + 2 H(+). Its pathway is purine metabolism; AMP biosynthesis via de novo pathway; AMP from IMP: step 1/2. Its function is as follows. Plays an important role in the de novo pathway and in the salvage pathway of purine nucleotide biosynthesis. Catalyzes the first committed step in the biosynthesis of AMP from IMP. This Arthroderma otae (strain ATCC MYA-4605 / CBS 113480) (Microsporum canis) protein is Adenylosuccinate synthetase.